Here is a 106-residue protein sequence, read N- to C-terminus: A-type ATP synthase subunit F (106 aa).

Belongs to the V-ATPase F subunit family. As to quaternary structure, has multiple subunits with at least A(3), B(3), C, D, E, F, H, I and proteolipid K(x).

The protein resides in the cell membrane. Its function is as follows. Component of the A-type ATP synthase that produces ATP from ADP in the presence of a proton gradient across the membrane. This Methanosphaera stadtmanae (strain ATCC 43021 / DSM 3091 / JCM 11832 / MCB-3) protein is A-type ATP synthase subunit F.